Consider the following 299-residue polypeptide: uncharacterized protein (299 aa).

The protein belongs to the glycosyltransferase 2 family.

This is an uncharacterized protein from Mycoplasma pneumoniae (strain ATCC 29342 / M129 / Subtype 1) (Mycoplasmoides pneumoniae).